We begin with the raw amino-acid sequence, 567 residues long: MDDKDIDKELRQKLNFSYCEETEIEGQKKVEESREASSQTPEKGEVQDSEAKGTPPWTPLSNVHELDTSSEKDKESPDQILRTPVSHPLKCPETPAQPDSRSKLLPSDSPSTPKTMLSRLVISPTGKLPSRGPKHLKLTPAPLKDEMTSLALVNINPFTPESYKKLFLQSGGKRKIRGDLEEAGPEEGKGGLPAKRCVLRETNMASRYEKEFLEVEKIGVGEFGTVYKCIKRLDGCVYAIKRSMKTFTELSNENSALHEVYAHAVLGHHPHVVRYYSSWAEDDHMIIQNEYCNGGSLQAAISENTKSGNHFEEPKLKDILLQISLGLNYIHNSSMVHLDIKPSNIFICHKMQSESSGVIEEVENEADWFLSANVMYKIGDLGHATSINKPKVEEGDSRFLANEILQEDYRHLPKADIFALGLTIAVAAGAESLPTNGAAWHHIRKGNFPDVPQELSESFSSLLKNMIQPDAEQRPSAAALARNTVLRPSLGKTEELQQQLNLEKFKTATLERELREAQQAQSPQGYTHHGDTGVSGTHTGSRSTKRLVGGKSARSSSFTSGEREPLH.

Basic and acidic residues-rich tracts occupy residues M1–Q12, E25–E35, E42–A51, and H64–P77. The segment at M1 to L117 is disordered. At S76 the chain carries Phosphoserine. The short motif at K173–K175 is the Nuclear localization signal element. The region spanning F212–L486 is the Protein kinase domain. ATP is bound by residues I218–V226 and K241. A Nuclear export signal motif is present at residues K315–Y329. D339 (proton acceptor) is an active-site residue. Mg(2+) is bound by residues N344 and D380. A coiled-coil region spans residues E494–Q519. The segment at L514–H567 is disordered.

This sequence belongs to the protein kinase superfamily. Ser/Thr protein kinase family. WEE1 subfamily. Phosphorylated on serine residues. Phosphorylation leads to increase its activity. Expressed in oocytes (at protein level). May also be expressed in testis.

Its subcellular location is the nucleus. It carries out the reaction L-tyrosyl-[protein] + ATP = O-phospho-L-tyrosyl-[protein] + ADP + H(+). Oocyte-specific protein tyrosine kinase that phosphorylates and inhibits CDK1/CDC2 and acts as a key regulator of meiosis during both prophase I and metaphase II. Required to maintain meiotic arrest in oocytes during the germinal vesicle (GV) stage, a long period of quiescence at dictyate prophase I, by phosphorylating CDK1 at 'Tyr-15', leading to inhibit CDK1 activity and prevent meiotic reentry. Also required for metaphase II exit during egg activation by phosphorylating CDK1 at 'Tyr-15', to ensure exit from meiosis in oocytes and promote pronuclear formation. The polypeptide is Wee1-like protein kinase 2 (WEE2) (Homo sapiens (Human)).